We begin with the raw amino-acid sequence, 1183 residues long: PAN2-PAN3 deadenylation complex catalytic subunit PAN2 (1183 aa).

Residues 1-24 (MDGWTEISRIAATTQPPKGPSPHI) form a disordered region. 3 WD repeats span residues 159–207 (DLNK…SIKS), 269–309 (PFPA…NVFL), and 327–366 (SKAP…STIT). A linker region spans residues 369–520 (FVNFPASIEQ…FQYKVPLSRK (152 aa)). In terms of domain architecture, USP spans 521–919 (KIPNCYSRLQ…KPVILVYHDS (399 aa)). The Exonuclease domain maps to 977 to 1151 (IAIDAEFVNL…EDAYTALLLY (175 aa)). The a divalent metal cation site is built by aspartate 980, glutamate 982, aspartate 1090, and aspartate 1143.

Belongs to the peptidase C19 family. PAN2 subfamily. In terms of assembly, forms a heterotrimer with an asymmetric homodimer of the regulatory subunit PAN3 to form the poly(A)-nuclease (PAN) deadenylation complex. A divalent metal cation is required as a cofactor.

It is found in the cytoplasm. It carries out the reaction Exonucleolytic cleavage of poly(A) to 5'-AMP.. With respect to regulation, positively regulated by the regulatory subunit PAN3. Functionally, catalytic subunit of the poly(A)-nuclease (PAN) deadenylation complex, one of two cytoplasmic mRNA deadenylases involved in mRNA turnover. PAN specifically shortens poly(A) tails of RNA and the activity is stimulated by poly(A)-binding protein PAB1. PAN deadenylation is followed by rapid degradation of the shortened mRNA tails by the CCR4-NOT complex. Deadenylated mRNAs are then degraded by two alternative mechanisms, namely exosome-mediated 3'-5' exonucleolytic degradation, or deadenylation-dependent mRNA decaping and subsequent 5'-3' exonucleolytic degradation by XRN1. May also be involved in post-transcriptional maturation of mRNA poly(A) tails. This Scheffersomyces stipitis (strain ATCC 58785 / CBS 6054 / NBRC 10063 / NRRL Y-11545) (Yeast) protein is PAN2-PAN3 deadenylation complex catalytic subunit PAN2.